A 206-amino-acid polypeptide reads, in one-letter code: Imidazoleglycerol-phosphate dehydratase (206 aa).

Belongs to the imidazoleglycerol-phosphate dehydratase family.

The protein localises to the cytoplasm. It carries out the reaction D-erythro-1-(imidazol-4-yl)glycerol 3-phosphate = 3-(imidazol-4-yl)-2-oxopropyl phosphate + H2O. It participates in amino-acid biosynthesis; L-histidine biosynthesis; L-histidine from 5-phospho-alpha-D-ribose 1-diphosphate: step 6/9. In Leptospira borgpetersenii serovar Hardjo-bovis (strain JB197), this protein is Imidazoleglycerol-phosphate dehydratase.